Consider the following 111-residue polypeptide: Nucleoid-associated protein Ppha_1174 (111 aa).

This sequence belongs to the YbaB/EbfC family. In terms of assembly, homodimer.

The protein localises to the cytoplasm. The protein resides in the nucleoid. In terms of biological role, binds to DNA and alters its conformation. May be involved in regulation of gene expression, nucleoid organization and DNA protection. The chain is Nucleoid-associated protein Ppha_1174 from Pelodictyon phaeoclathratiforme (strain DSM 5477 / BU-1).